Reading from the N-terminus, the 321-residue chain is Biotin synthase (321 aa).

The region spanning 44-270 is the Radical SAM core domain; sequence RGVRIHILNN…DAEVRAAGGR (227 aa). Residues cysteine 59, cysteine 63, and cysteine 66 each coordinate [4Fe-4S] cluster. Residues cysteine 103, cysteine 135, cysteine 195, and arginine 265 each coordinate [2Fe-2S] cluster.

This sequence belongs to the radical SAM superfamily. Biotin synthase family. As to quaternary structure, homodimer. The cofactor is [4Fe-4S] cluster. [2Fe-2S] cluster is required as a cofactor.

The catalysed reaction is (4R,5S)-dethiobiotin + (sulfur carrier)-SH + 2 reduced [2Fe-2S]-[ferredoxin] + 2 S-adenosyl-L-methionine = (sulfur carrier)-H + biotin + 2 5'-deoxyadenosine + 2 L-methionine + 2 oxidized [2Fe-2S]-[ferredoxin]. It participates in cofactor biosynthesis; biotin biosynthesis; biotin from 7,8-diaminononanoate: step 2/2. In terms of biological role, catalyzes the conversion of dethiobiotin (DTB) to biotin by the insertion of a sulfur atom into dethiobiotin via a radical-based mechanism. The polypeptide is Biotin synthase (Magnetococcus marinus (strain ATCC BAA-1437 / JCM 17883 / MC-1)).